Reading from the N-terminus, the 213-residue chain is StAR-related lipid transfer protein 5 (213 aa).

The 213-residue stretch at 1-213 (MDPSWATQES…LQKAVRKFHH (213 aa)) folds into the START domain.

In terms of tissue distribution, expressed in most tissues, with highest levels in liver and in kidney.

Its function is as follows. May be involved in the intracellular transport of sterols or other lipids. May bind cholesterol or other sterols. This is StAR-related lipid transfer protein 5 (Stard5) from Mus musculus (Mouse).